Consider the following 178-residue polypeptide: CASP-like protein 4D1 (178 aa).

Over Met-1–Arg-14 the chain is Cytoplasmic. The helical transmembrane segment at Thr-15–Ile-35 threads the bilayer. At Ser-36–Arg-60 the chain is on the extracellular side. A helical membrane pass occupies residues Tyr-61–Ile-81. The Cytoplasmic segment spans residues Ser-82–Ala-149. A helical membrane pass occupies residues Ser-150–Leu-170. Residues Ser-171–Ser-178 are Extracellular-facing.

Belongs to the Casparian strip membrane proteins (CASP) family. In terms of assembly, homodimer and heterodimers.

It is found in the cell membrane. This chain is CASP-like protein 4D1, found in Arabidopsis lyrata subsp. lyrata (Lyre-leaved rock-cress).